We begin with the raw amino-acid sequence, 84 residues long: Sec-independent protein translocase protein TatA (84 aa).

The chain crosses the membrane as a helical span at residues Met-1–Gly-21. 2 stretches are compositionally biased toward basic and acidic residues: residues Ala-42–Gln-55 and Ile-64–Val-84. The segment at Ala-42–Val-84 is disordered.

The protein belongs to the TatA/E family. As to quaternary structure, the Tat system comprises two distinct complexes: a TatABC complex, containing multiple copies of TatA, TatB and TatC subunits, and a separate TatA complex, containing only TatA subunits. Substrates initially bind to the TatABC complex, which probably triggers association of the separate TatA complex to form the active translocon.

The protein localises to the cell inner membrane. In terms of biological role, part of the twin-arginine translocation (Tat) system that transports large folded proteins containing a characteristic twin-arginine motif in their signal peptide across membranes. TatA could form the protein-conducting channel of the Tat system. The polypeptide is Sec-independent protein translocase protein TatA (Salmonella typhi).